We begin with the raw amino-acid sequence, 144 residues long: uncharacterized protein (144 aa).

This is an uncharacterized protein from Methanocaldococcus jannaschii (strain ATCC 43067 / DSM 2661 / JAL-1 / JCM 10045 / NBRC 100440) (Methanococcus jannaschii).